Here is a 362-residue protein sequence, read N- to C-terminus: Chorismate synthase (362 aa).

Arginine 46 is an NADP(+) binding site. Residues 122–124, 238–239, glycine 278, 293–297, and arginine 319 each bind FMN; these read RSS, NA, and KPTPS.

The protein belongs to the chorismate synthase family. As to quaternary structure, homotetramer. FMNH2 serves as cofactor.

The catalysed reaction is 5-O-(1-carboxyvinyl)-3-phosphoshikimate = chorismate + phosphate. Its pathway is metabolic intermediate biosynthesis; chorismate biosynthesis; chorismate from D-erythrose 4-phosphate and phosphoenolpyruvate: step 7/7. In terms of biological role, catalyzes the anti-1,4-elimination of the C-3 phosphate and the C-6 proR hydrogen from 5-enolpyruvylshikimate-3-phosphate (EPSP) to yield chorismate, which is the branch point compound that serves as the starting substrate for the three terminal pathways of aromatic amino acid biosynthesis. This reaction introduces a second double bond into the aromatic ring system. The polypeptide is Chorismate synthase (Campylobacter jejuni subsp. doylei (strain ATCC BAA-1458 / RM4099 / 269.97)).